The following is a 49-amino-acid chain: uncharacterized protein (49 aa).

An N-terminal signal peptide occupies residues 1–22; sequence MKLNAFHLVVVVLIVSIFSVSS.

The protein localises to the secreted. This is an uncharacterized protein from Dictyostelium discoideum (Social amoeba).